Consider the following 462-residue polypeptide: L-seryl-tRNA(Sec) selenium transferase (462 aa).

An N6-(pyridoxal phosphate)lysine modification is found at lysine 293.

The protein belongs to the SelA family. Pyridoxal 5'-phosphate is required as a cofactor.

The protein resides in the cytoplasm. It catalyses the reaction L-seryl-tRNA(Sec) + selenophosphate + H(+) = L-selenocysteinyl-tRNA(Sec) + phosphate. It functions in the pathway aminoacyl-tRNA biosynthesis; selenocysteinyl-tRNA(Sec) biosynthesis; selenocysteinyl-tRNA(Sec) from L-seryl-tRNA(Sec) (bacterial route): step 1/1. Functionally, converts seryl-tRNA(Sec) to selenocysteinyl-tRNA(Sec) required for selenoprotein biosynthesis. This Clostridium botulinum (strain Okra / Type B1) protein is L-seryl-tRNA(Sec) selenium transferase.